The following is a 481-amino-acid chain: Pre-mRNA-splicing factor sap114 (481 aa).

The span at 1 to 15 shows a compositional bias: polar residues; sequence MSSLMEFQDRNTTNN. The disordered stretch occupies residues 1 to 34; it reads MSSLMEFQDRNTTNNETEHQKSITDQSSSVPAGV. 2 SURP motif repeats span residues 44-86 and 147-189; these read IIDK…HPYY and VLRL…YPYF. Disordered regions lie at residues 335-373 and 452-481; these read PSLASPEKGGISSTTSVSPAAQASPVLSTTTQPKVQKPV and GVEISQEEIERRKRAATQSAWGATPTNKRR. Polar residues-rich tracts occupy residues 345–368 and 467–481; these read ISSTTSVSPAAQASPVLSTTTQPK and ATQSAWGATPTNKRR.

In terms of assembly, belongs to the 40S cdc5-associated complex (or cwf complex), a spliceosome sub-complex reminiscent of a late-stage spliceosome composed of the U2, U5 and U6 snRNAs and at least brr2, cdc5, cwf2/prp3, cwf3/syf1, cwf4/syf3, cwf5/ecm2, spp42/cwf6, cwf7/spf27, cwf8, cwf9, cwf10, cwf11, cwf12, prp45/cwf13, cwf14, cwf15, cwf16, cwf17, cwf18, cwf19, cwf20, cwf21, cwf22, cwf23, cwf24, cwf25, cwf26, cyp7/cwf27, cwf28, cwf29/ist3, lea1, msl1, prp5/cwf1, prp10, prp12/sap130, prp17, prp22, sap61, sap62, sap114, sap145, slu7, smb1, smd1, smd3, smf1, smg1 and syf2.

Its subcellular location is the nucleus. In terms of biological role, involved in pre-mRNA splicing. May be involved in endoplasmic reticulum-associated protein degradation (ERAD) and required for growth at low and high temperatures. The sequence is that of Pre-mRNA-splicing factor sap114 (sap114) from Schizosaccharomyces pombe (strain 972 / ATCC 24843) (Fission yeast).